A 203-amino-acid chain; its full sequence is ATP-dependent Clp protease proteolytic subunit (203 aa).

Residue Ser-107 is the Nucleophile of the active site. His-132 is an active-site residue.

Belongs to the peptidase S14 family. Fourteen ClpP subunits assemble into 2 heptameric rings which stack back to back to give a disk-like structure with a central cavity, resembling the structure of eukaryotic proteasomes.

The protein resides in the cytoplasm. The catalysed reaction is Hydrolysis of proteins to small peptides in the presence of ATP and magnesium. alpha-casein is the usual test substrate. In the absence of ATP, only oligopeptides shorter than five residues are hydrolyzed (such as succinyl-Leu-Tyr-|-NHMec, and Leu-Tyr-Leu-|-Tyr-Trp, in which cleavage of the -Tyr-|-Leu- and -Tyr-|-Trp bonds also occurs).. Its function is as follows. Cleaves peptides in various proteins in a process that requires ATP hydrolysis. Has a chymotrypsin-like activity. Plays a major role in the degradation of misfolded proteins. The protein is ATP-dependent Clp protease proteolytic subunit of Shewanella sediminis (strain HAW-EB3).